Consider the following 401-residue polypeptide: Argininosuccinate synthase (401 aa).

8 to 16 (AYSGGLDTS) contributes to the ATP binding site. Residue Tyr-87 coordinates L-citrulline. Residue Gly-117 participates in ATP binding. L-aspartate is bound by residues Thr-119, Asn-123, and Asp-124. Asn-123 contacts L-citrulline. Residues Arg-127, Ser-175, Glu-259, and Tyr-271 each coordinate L-citrulline.

It belongs to the argininosuccinate synthase family. Type 1 subfamily. As to quaternary structure, homotetramer.

The protein resides in the cytoplasm. It carries out the reaction L-citrulline + L-aspartate + ATP = 2-(N(omega)-L-arginino)succinate + AMP + diphosphate + H(+). It participates in amino-acid biosynthesis; L-arginine biosynthesis; L-arginine from L-ornithine and carbamoyl phosphate: step 2/3. The chain is Argininosuccinate synthase from Arthrobacter sp. (strain FB24).